Here is a 165-residue protein sequence, read N- to C-terminus: Choriogonadotropin subunit beta 3 (165 aa).

The signal sequence occupies residues 1–20; sequence MEMFQGLLLLLLLSMGGTWA. 6 disulfides stabilise this stretch: C29–C77, C43–C92, C46–C130, C54–C108, C58–C110, and C113–C120. N-linked (GlcNAc...) asparagine glycans are attached at residues N33 and N50. Positions 131–165 are disordered; the sequence is DDPRFQDSSSSKAPPPSLPSPSRLPGPSDTPILPQ. O-linked (GalNAc...) serine glycans are attached at residues S141, S147, S152, and S158. The segment covering 143 to 154 has biased composition (pro residues); it reads APPPSLPSPSRL.

Belongs to the glycoprotein hormones subunit beta family. Heterodimer of a common alpha chain identical in LH, FSH, TSH and HCG and a unique beta chain distinct in each of the hormones. As to expression, high expression in the placenta throughout pregnancy.

The protein resides in the secreted. Its function is as follows. Beta subunit of the human chorionic gonadotropin (hCG). hCG is a complex glycoprotein composed of two glycosylated subunits alpha and beta which are non-covalently associated. The alpha subunit is identical to those in the pituitary gonadotropin hormones (LH, FSH and TSH). The beta subunits are distinct in each of the hormones and confer receptor and biological specificity. Has an essential role in pregnancy and maternal adaptation. Stimulates the ovaries to synthesize the steroids that are essential for the maintenance of pregnancy. The protein is Choriogonadotropin subunit beta 3 (CGB3) of Homo sapiens (Human).